Consider the following 595-residue polypeptide: Aspartate--tRNA(Asp/Asn) ligase (595 aa).

L-aspartate is bound at residue glutamate 175. The tract at residues 199 to 202 (QQYK) is aspartate. Arginine 221 and histidine 454 together coordinate L-aspartate. 221-223 (RDE) contacts ATP. Residue glutamate 488 participates in ATP binding. Residue arginine 495 participates in L-aspartate binding. 540-543 (GIDR) serves as a coordination point for ATP.

This sequence belongs to the class-II aminoacyl-tRNA synthetase family. Type 1 subfamily. As to quaternary structure, homodimer.

The protein resides in the cytoplasm. It carries out the reaction tRNA(Asx) + L-aspartate + ATP = L-aspartyl-tRNA(Asx) + AMP + diphosphate. In terms of biological role, aspartyl-tRNA synthetase with relaxed tRNA specificity since it is able to aspartylate not only its cognate tRNA(Asp) but also tRNA(Asn). Reaction proceeds in two steps: L-aspartate is first activated by ATP to form Asp-AMP and then transferred to the acceptor end of tRNA(Asp/Asn). This is Aspartate--tRNA(Asp/Asn) ligase from Agrobacterium fabrum (strain C58 / ATCC 33970) (Agrobacterium tumefaciens (strain C58)).